The sequence spans 194 residues: Translation machinery-associated protein 22 (194 aa).

Residues valine 102–tyrosine 173 enclose the SUI1 domain.

The protein belongs to the DENR family. As to quaternary structure, interacts with the 40S ribosomal subunit.

Its subcellular location is the cytoplasm. This Neosartorya fischeri (strain ATCC 1020 / DSM 3700 / CBS 544.65 / FGSC A1164 / JCM 1740 / NRRL 181 / WB 181) (Aspergillus fischerianus) protein is Translation machinery-associated protein 22 (tma22).